A 204-amino-acid chain; its full sequence is Ras-related protein Rab-1D (204 aa).

GTP contacts are provided by residues 17–25 (GDSGVGKSC), 35–42 (WTDTHIST), 65–69 (DTAGQ), 123–126 (NKTD), and 153–155 (SAK). The Effector region motif lies at 39 to 47 (HISTIGVDF). Residues 182 to 191 (PKPDEVDIKS) are compositionally biased toward basic and acidic residues. The segment at 182-204 (PKPDEVDIKSKNKTKSGGKKSFC) is disordered. The span at 192–204 (KNKTKSGGKKSFC) shows a compositional bias: basic residues. Residue Cys-204 is the site of S-geranylgeranyl cysteine attachment.

It belongs to the small GTPase superfamily. Rab family.

The protein localises to the cell membrane. This is Ras-related protein Rab-1D (rab1D) from Dictyostelium discoideum (Social amoeba).